Here is a 118-residue protein sequence, read N- to C-terminus: UPF0344 protein YisL (118 aa).

A run of 4 helical transmembrane segments spans residues 4 to 24 (LHIT…SLYS), 33 to 53 (ITHM…AELF), 62 to 82 (EYAG…MLLI), and 93 to 113 (LWVG…HLPI).

Belongs to the UPF0344 family.

The protein resides in the cell membrane. The sequence is that of UPF0344 protein YisL (yisL) from Bacillus subtilis (strain 168).